The chain runs to 195 residues: 3-isopropylmalate dehydratase small subunit (195 aa).

The protein belongs to the LeuD family. LeuD type 1 subfamily. As to quaternary structure, heterodimer of LeuC and LeuD.

The catalysed reaction is (2R,3S)-3-isopropylmalate = (2S)-2-isopropylmalate. Its pathway is amino-acid biosynthesis; L-leucine biosynthesis; L-leucine from 3-methyl-2-oxobutanoate: step 2/4. Its function is as follows. Catalyzes the isomerization between 2-isopropylmalate and 3-isopropylmalate, via the formation of 2-isopropylmaleate. The polypeptide is 3-isopropylmalate dehydratase small subunit (Salinispora tropica (strain ATCC BAA-916 / DSM 44818 / JCM 13857 / NBRC 105044 / CNB-440)).